We begin with the raw amino-acid sequence, 461 residues long: Bifunctional protein HldE (461 aa).

Residues 1–312 (MLEFLSQQKP…IKSFNRVDFE (312 aa)) are ribokinase. 191-194 (NKKE) contributes to the ATP binding site. The active site involves Asp-259. The interval 334-461 (FTNGCFDIVH…KIIEKIKDKK (128 aa)) is cytidylyltransferase.

In the N-terminal section; belongs to the carbohydrate kinase PfkB family. This sequence in the C-terminal section; belongs to the cytidylyltransferase family. In terms of assembly, homodimer.

The enzyme catalyses D-glycero-beta-D-manno-heptose 7-phosphate + ATP = D-glycero-beta-D-manno-heptose 1,7-bisphosphate + ADP + H(+). It carries out the reaction D-glycero-beta-D-manno-heptose 1-phosphate + ATP + H(+) = ADP-D-glycero-beta-D-manno-heptose + diphosphate. Its pathway is nucleotide-sugar biosynthesis; ADP-L-glycero-beta-D-manno-heptose biosynthesis; ADP-L-glycero-beta-D-manno-heptose from D-glycero-beta-D-manno-heptose 7-phosphate: step 1/4. It functions in the pathway nucleotide-sugar biosynthesis; ADP-L-glycero-beta-D-manno-heptose biosynthesis; ADP-L-glycero-beta-D-manno-heptose from D-glycero-beta-D-manno-heptose 7-phosphate: step 3/4. Catalyzes the phosphorylation of D-glycero-D-manno-heptose 7-phosphate at the C-1 position to selectively form D-glycero-beta-D-manno-heptose-1,7-bisphosphate. In terms of biological role, catalyzes the ADP transfer from ATP to D-glycero-beta-D-manno-heptose 1-phosphate, yielding ADP-D-glycero-beta-D-manno-heptose. The chain is Bifunctional protein HldE from Campylobacter jejuni subsp. jejuni serotype O:6 (strain 81116 / NCTC 11828).